Here is a 449-residue protein sequence, read N- to C-terminus: MLKYRGLENKNVLVIGLAKSGYEAAKLLNKLGANVIVNDGKDLSQDAHAIDLENEGIKVIGGEHPLSLLDSHPIIVKNPGIPYTVPLIEAAVEKGLTILTEVELSYLISEAPIIGVTGTNGKTTVTSLIGDMFQKSRVTGKLSGNIGYVASKVAQEVTADDYLVTELSSFQLLGIDQYKPHIAIITNIYSAHLDYHETLDNYQNAKKQIYKNQTENDYLICNYHQRHLIESETLRAKTYYFSTQQEVDGIYVKDDYIVFKGFRIIHKDDLVLPGEHNLENILAAVLAALLSGISVKAIIDSLTSFSGIEHRLQYIGTNKTNKYYNDSKATNTLATQFALDSFKQPIIWLCGGLDRGNDFDELIPHMKNVRMMVAFGETKEKFIKLGESQGKYVITANDVQDAVDKIQSVIEPNDVVLLSPACASWDQYNTFEERGNKFIKSFQANLPSF.

118 to 124 is an ATP binding site; the sequence is GTNGKTT.

It belongs to the MurCDEF family.

Its subcellular location is the cytoplasm. The catalysed reaction is UDP-N-acetyl-alpha-D-muramoyl-L-alanine + D-glutamate + ATP = UDP-N-acetyl-alpha-D-muramoyl-L-alanyl-D-glutamate + ADP + phosphate + H(+). Its pathway is cell wall biogenesis; peptidoglycan biosynthesis. Functionally, cell wall formation. Catalyzes the addition of glutamate to the nucleotide precursor UDP-N-acetylmuramoyl-L-alanine (UMA). In Staphylococcus saprophyticus subsp. saprophyticus (strain ATCC 15305 / DSM 20229 / NCIMB 8711 / NCTC 7292 / S-41), this protein is UDP-N-acetylmuramoylalanine--D-glutamate ligase.